We begin with the raw amino-acid sequence, 829 residues long: Leucine--tRNA ligase (829 aa).

A 'HIGH' region motif is present at residues 40–50 (PYPSGNIHMGH). A 'KMSKS' region motif is present at residues 594 to 598 (KMSKS). K597 contributes to the ATP binding site.

The protein belongs to the class-I aminoacyl-tRNA synthetase family.

The protein resides in the cytoplasm. It carries out the reaction tRNA(Leu) + L-leucine + ATP = L-leucyl-tRNA(Leu) + AMP + diphosphate. This Anaplasma marginale (strain St. Maries) protein is Leucine--tRNA ligase.